A 794-amino-acid polypeptide reads, in one-letter code: Alpha-1,3-galactosidase B (794 aa).

An N-terminal signal peptide occupies residues 1 to 57; that stretch reads MEGNLSFSLMEASGRSIFFLIEGIREQSIKNMFSRMFSWSFVVAACLAGLFPAQSQG. PbH1 repeat units follow at residues 468–499, 609–631, 632–654, 665–686, and 707–728; these read SEDFHMKGGGVMVRKGTGRVHTAGADATHFSN, YPSVVFRNNIVRNNRARGSLFTT, PERVLVEGNLFDHSSGSAILLAG, CHEVVIRKNTFINNLTSRYQFT, and HRNVLIENNVFKTFDVPLLFAI.

Belongs to the glycosyl hydrolase 110 family. B subfamily.

The enzyme catalyses Hydrolysis of terminal, non-reducing branched (1-&gt;3)-alpha-D-galactosidic residues, producing free D-galactose.. The catalysed reaction is Hydrolysis of terminal, non-reducing linear (1-&gt;3)-alpha-D-galactosidic residues, producing free D-galactose.. It catalyses the reaction Hydrolysis of terminal, non-reducing alpha-D-galactose residues in alpha-D-galactosides, including galactose oligosaccharides, galactomannans and galactolipids.. In terms of biological role, alpha-galactosidase. Removes both branched alpha-1,3-linked galactose residues of blood group B antigens and linear alpha-1,3-linked galactose structures. The chain is Alpha-1,3-galactosidase B (glaB) from Akkermansia muciniphila (strain ATCC BAA-835 / DSM 22959 / JCM 33894 / BCRC 81048 / CCUG 64013 / CIP 107961 / Muc).